We begin with the raw amino-acid sequence, 677 residues long: MDRGLPGPATPAVTPQPPARPQDDEEAAAPHAAAGPDGQLGTVEQRLEPAKRAAHNIHKRLQACLQGQSGADMDKRVKKLPLMALSTTMAESFKELDPDSSMGKALEMSCAIQNQLARILAEFEMTLERDVLQPLSRLSEEELPAILKHKKSLQKLVSDWNTLKSRLSQATKNSGSSQGLGGSPGSHSHTTMANKVETLKEEEEELKRKVEQCRDEYLADLYHFVTKEDSYANYFIRLLEIQADYHRRSLSSLDTALAELRENHGQADHSPSMTATHFPRVYGVSLATHLQELGREIALPIEACVMMLLSEGMKEEGLFRLAAGASVLKRLKQTMASDPHSLEEFCSDPHAVAGALKSYLRELPEPLMTFDLYDDWMRAASLKEPGARLQALQEVCSRLPPENLSNLRYLMKFLARLAEEQEVNKMTPSNIAIVLGPNLLWPPEKEGDQAQLDAASVSSIQVVGVVEALIQSADTLFPGDINFNVSGLFSAVTLQDTVSDRLASEELPSTAVPTPATTPAPAPAPAPAPAPALASAATKERTESEVPPRPASPKVTRSPPETAAPVEDMARRSTGSLAAAVETASGRQALVVGKPSPYMFECITENFSIDPARTLMVGDRLETDILFGHRCGMTTVLTLTGVSRLEEAQAYLAAGQHDLVPHYYVESIADLTEGLED.

Composition is skewed to low complexity over residues 1–13 (MDRGLPGPATPAV) and 29–39 (APHAAAGPDGQ). Disordered stretches follow at residues 1–39 (MDRGLPGPATPAVTPQPPARPQDDEEAAAPHAAAGPDGQ) and 168–190 (SQATKNSGSSQGLGGSPGSHSHT). Residues 25-270 (EEAAAPHAAA…RENHGQADHS (246 aa)) form the BAR domain. Residues Ser183, Ser270, and Ser272 each carry the phosphoserine modification. Positions 284-477 (VSLATHLQEL…ALIQSADTLF (194 aa)) constitute a Rho-GAP domain. Residues 504-577 (SEELPSTAVP…DMARRSTGSL (74 aa)) form a disordered region. Positions 516-530 (ATTPAPAPAPAPAPA) are enriched in pro residues. 2 positions are modified to phosphoserine: Ser552 and Ser558. The interval 574 to 677 (TGSLAAAVET…IADLTEGLED (104 aa)) is mediates non-covalent binding of poly-ubiquitin chains.

As to expression, expressed in brain (at protein level).

It localises to the cell membrane. It is found in the cytoplasm. Its subcellular location is the cytosol. Its function is as follows. GTPase activating protein (GAP) which specifically converts GTP-bound RAC1 and CDC42 in their inactive GDP-bound form. The GAP activity is enhanced by the non-covalent binding of K-29 and K-48 polyubiquitin chains. In Homo sapiens (Human), this protein is Bargin.